The primary structure comprises 461 residues: V-type ATP synthase beta chain 1 (461 aa).

Belongs to the ATPase alpha/beta chains family.

Produces ATP from ADP in the presence of a proton gradient across the membrane. The V-type beta chain is a regulatory subunit. The sequence is that of V-type ATP synthase beta chain 1 from Clostridium tetani (strain Massachusetts / E88).